Here is a 749-residue protein sequence, read N- to C-terminus: Chitin synthase G (749 aa).

5 helical membrane passes run 40-60 (CVGE…PLPP), 73-93 (VLQW…WLFC), 421-441 (FMQN…ISII), 451-471 (PVGF…YFGI), and 483-503 (LMFI…IFTA). A disordered region spans residues 683-749 (IESGSGIPSG…RRYMQPEQMV (67 aa)). Residues 697–718 (LSSSVPQSGMQQSRAVPGNMSQ) are compositionally biased toward polar residues. Asparagine 715 carries an N-linked (GlcNAc...) asparagine glycan. Residues 728–742 (YTKRPSRIPRQKRRY) are compositionally biased toward basic residues.

It belongs to the chitin synthase family. Class VI subfamily.

The protein localises to the cell membrane. The enzyme catalyses [(1-&gt;4)-N-acetyl-beta-D-glucosaminyl](n) + UDP-N-acetyl-alpha-D-glucosamine = [(1-&gt;4)-N-acetyl-beta-D-glucosaminyl](n+1) + UDP + H(+). Its function is as follows. Polymerizes chitin, a structural polymer of the cell wall and septum, by transferring the sugar moiety of UDP-GlcNAc to the non-reducing end of the growing chitin polymer. Plays an important role in septal growth or maintenance. Mediates colony spore formation. The chain is Chitin synthase G from Aspergillus niger (strain ATCC MYA-4892 / CBS 513.88 / FGSC A1513).